The following is a 448-amino-acid chain: Alginate biosynthesis transcriptional regulatory protein AlgB (448 aa).

In terms of domain architecture, Response regulatory spans 10–124; sequence RILLVDDESA…QLRLATAKQL (115 aa). Position 59 is a 4-aspartylphosphate (D59). Residues 147-376 enclose the Sigma-54 factor interaction domain; the sequence is LDSHSPAMMA…LRNVVERASI (230 aa). Residues 175–182 and 238–247 each bind ATP; these read GESGTGKG and ADGGTLFLDE. The segment at residues 425–444 is a DNA-binding region (H-T-H motif); sequence LDQAAKTLGIDASTLYRKRK.

It functions in the pathway glycan biosynthesis; alginate biosynthesis [regulation]. Positive regulator of the alginate biosynthetic gene algD. In Pseudomonas putida (strain ATCC 47054 / DSM 6125 / CFBP 8728 / NCIMB 11950 / KT2440), this protein is Alginate biosynthesis transcriptional regulatory protein AlgB (algB).